The sequence spans 418 residues: MNLKLQLKILSFLQFCLWGSWLTTLGSYMFVTLKFDGASIGAVYSSLGIAAVFMPALLGIVADKWLSAKWVYAICHTIGAITLFMAAQVTTPEAMFLVILINSFAYMPTLGLINTISYYRLQNAGMDIVTDFPPIRIWGTIGFIMAMWVVSLSGFELSHMQLYIGAALSAILVLFTLTLPHIPVAKQQANQSWTTLLGLDAFALFKNKRMAIFFIFSMLLGAELQITNMFGNTFLHSFDKDPMFASSFIVQHASIIMSISQISETLFILTIPFFLSRYGIKNVMMISIVAWILRFALFAYGDPTPFGTVLLVLSMIVYGCAFDFFNISGSVFVEKEVSPAIRASAQGMFLMMTNGFGCILGGIVSGKVVEMYTQNGITDWQTVWLIFAGYSVVLAFAFMAMFKYKHVRVPTGTQTVSH.

Over M1–K4 the chain is Cytoplasmic. A helical transmembrane segment spans residues L5–M29. The Periplasmic segment spans residues F30–D36. A helical membrane pass occupies residues G37–L58. Topologically, residues G59–S67 are cytoplasmic. A helical transmembrane segment spans residues A68–Q88. The Periplasmic segment spans residues V89–T91. The chain crosses the membrane as a helical span at residues P92–I113. Over N114 to I135 the chain is Cytoplasmic. Residues R136–E156 traverse the membrane as a helical segment. Over L157–S158 the chain is Periplasmic. A helical membrane pass occupies residues H159–T178. Topologically, residues L179–R209 are cytoplasmic. A helical membrane pass occupies residues M210–H236. The Periplasmic segment spans residues S237–S247. A helical membrane pass occupies residues F248–I268. Residues L269–I280 are Cytoplasmic-facing. Residues K281–Y300 form a helical membrane-spanning segment. Residues G301–P305 are Periplasmic-facing. The chain crosses the membrane as a helical span at residues F306–N326. The Cytoplasmic segment spans residues I327–Q346. The helical transmembrane segment at G347–V369 threads the bilayer. Over E370–D379 the chain is Periplasmic. The helical transmembrane segment at W380 to K403 threads the bilayer. Residues Y404–H418 are Cytoplasmic-facing.

This sequence belongs to the major facilitator superfamily. Nucleoside:H(+) symporter (NHS) (TC 2.A.1.10) family.

The protein resides in the cell inner membrane. The enzyme catalyses adenosine(in) + H(+)(in) = adenosine(out) + H(+)(out). The catalysed reaction is uridine(in) + H(+)(in) = uridine(out) + H(+)(out). It catalyses the reaction thymidine(in) + H(+)(in) = thymidine(out) + H(+)(out). It carries out the reaction cytidine(in) + H(+)(in) = cytidine(out) + H(+)(out). The enzyme catalyses 2'-deoxycytidine(in) + H(+)(in) = 2'-deoxycytidine(out) + H(+)(out). The catalysed reaction is guanosine(in) + H(+)(in) = guanosine(out) + H(+)(out). It catalyses the reaction inosine(in) + H(+)(in) = inosine(out) + H(+)(out). With respect to regulation, inhibited by the protonophore uncouplers 2,4-dinitrophenol and carbonyl cyanide m-chlorophenylhydrazone (CCCP), and by valinomycin. Inhibited by the nucleoside antibiotic showdomycin. Its function is as follows. Broad-specificity transporter of purine and pyrimidine nucleosides. Can transport adenosine, uridine, thymidine, cytidine, deoxycytidine, guanosine and inosine. Can also transport xanthosine, but with a very low affinity. Transport is driven by a proton motive force. This chain is Nucleoside permease NupG, found in Escherichia coli (strain K12).